We begin with the raw amino-acid sequence, 580 residues long: 2-succinyl-5-enolpyruvyl-6-hydroxy-3-cyclohexene-1-carboxylate synthase (580 aa).

This sequence belongs to the TPP enzyme family. MenD subfamily. As to quaternary structure, homodimer. Mg(2+) is required as a cofactor. Mn(2+) serves as cofactor. Requires thiamine diphosphate as cofactor.

It carries out the reaction isochorismate + 2-oxoglutarate + H(+) = 5-enolpyruvoyl-6-hydroxy-2-succinyl-cyclohex-3-ene-1-carboxylate + CO2. The protein operates within quinol/quinone metabolism; 1,4-dihydroxy-2-naphthoate biosynthesis; 1,4-dihydroxy-2-naphthoate from chorismate: step 2/7. It functions in the pathway quinol/quinone metabolism; menaquinone biosynthesis. Functionally, catalyzes the thiamine diphosphate-dependent decarboxylation of 2-oxoglutarate and the subsequent addition of the resulting succinic semialdehyde-thiamine pyrophosphate anion to isochorismate to yield 2-succinyl-5-enolpyruvyl-6-hydroxy-3-cyclohexene-1-carboxylate (SEPHCHC). The polypeptide is 2-succinyl-5-enolpyruvyl-6-hydroxy-3-cyclohexene-1-carboxylate synthase (Listeria monocytogenes serovar 1/2a (strain ATCC BAA-679 / EGD-e)).